A 389-amino-acid polypeptide reads, in one-letter code: MLSFDYSIPTKVFFGKGKIDVIGEEIKKYGSRVLIVYGGGSIKRNGIYDRATAILKENNIAFYELSGVEPNPRITTVKKGIEICRENNVDLVLAIGGGSAIDCSKVIAAGVYYDGDTWDMVKDPSKITKVLPIASILTLSATGSEMDQIAVISNMETNEKLGVGHDDMRPKFSVLDPTYTFTVPKNQTAAGTADIMSHTFESYFSGVEGAYVQDGIAEAILRTCIKYGKIAMEKTDDYEARANLMWASSLAINGLLSLGKDRKWSCHPMEHELSAYYDITHGVGLAILTPNWMEYILNDDTLHKFVSYGINVWGIDKNKDNYEIAREAIKNTREYFNSLGIPSKLREVGIGKDKLELMAKQAVRNSGGTIGSLRPINAEDVLEIFKKSY.

Belongs to the iron-containing alcohol dehydrogenase family. In terms of assembly, homodimer.

Its pathway is alcohol metabolism; butanol biosynthesis. This chain is NADH-dependent butanol dehydrogenase A (bdhA), found in Clostridium acetobutylicum (strain ATCC 824 / DSM 792 / JCM 1419 / IAM 19013 / LMG 5710 / NBRC 13948 / NRRL B-527 / VKM B-1787 / 2291 / W).